Consider the following 71-residue polypeptide: MSFFHVVFVAFVIAAIGAAGWFVTPKGKNQTLLRTSLLLTLTCCYLMWAITYLCQLHPLITPRRSDLRMEY.

The Lumenal segment spans residues 1-2; it reads MS. A helical transmembrane segment spans residues 3 to 23; it reads FFHVVFVAFVIAAIGAAGWFV. Topologically, residues 24 to 35 are cytoplasmic; that stretch reads TPKGKNQTLLRT. A helical membrane pass occupies residues 36–56; sequence SLLLTLTCCYLMWAITYLCQL. Residues 57-71 are Lumenal-facing; that stretch reads HPLITPRRSDLRMEY.

This sequence belongs to the V-ATPase e1/e2 subunit family. As to quaternary structure, V-ATPase is a heteromultimeric enzyme composed of a peripheral catalytic V1 complex (components A to H) attached to an integral membrane V0 proton pore complex (components: a, c, c', c'', d, e, f and VOA1).

The protein localises to the vacuole membrane. Functionally, subunit of the V0 complex of vacuolar(H+)-ATPase (V-ATPase), a multisubunit enzyme composed of a peripheral complex (V1) that hydrolyzes ATP and a membrane integral complex (V0) that translocates protons. V-ATPase is responsible for acidifying and maintaining the pH of intracellular compartments. The polypeptide is V-type proton ATPase subunit e (VMA9) (Cryptococcus neoformans var. neoformans serotype D (strain JEC21 / ATCC MYA-565) (Filobasidiella neoformans)).